The sequence spans 551 residues: Solute carrier family 22 member 6 (551 aa).

Residues 1–9 are Cytoplasmic-facing; that stretch reads MAFNDLLKQ. Residues 10-30 traverse the membrane as a helical segment; it reads VGGVGRFQLIQVTMVVAPLLL. At 31-135 the chain is on the extracellular side; that stretch reads MASHNTLQNF…LVCSHRAFRQ (105 aa). N-linked (GlcNAc...) asparagine glycans are attached at residues asparagine 39, asparagine 56, asparagine 92, and asparagine 113. A helical transmembrane segment spans residues 136–156; it reads LAQSLYMVGVLLGAMVFGYLA. The Cytoplasmic segment spans residues 157–164; it reads DRLGRRKV. Residues 165–187 form a helical membrane-spanning segment; the sequence is LILNYLQTAVSGTCAAYAPNYTV. Over 188–195 the chain is Extracellular; that stretch reads YCVFRLLS. The helical transmembrane segment at 196-216 threads the bilayer; sequence GMSLASIAINCMTLNVEWMPI. The Cytoplasmic portion of the chain corresponds to 217-224; sequence HTRAYVGT. Residues 225–245 traverse the membrane as a helical segment; that stretch reads LIGYVYSLGQFLLAGIAYAVP. At 246-248 the chain is on the extracellular side; sequence HWR. Residues 249–269 traverse the membrane as a helical segment; that stretch reads HLQLVVSVPFFIAFIYSWFFI. Residues 270 to 337 lie on the Cytoplasmic side of the membrane; that stretch reads ESARWYSSSG…ELLRCPTLRH (68 aa). Residues 338-358 form a helical membrane-spanning segment; that stretch reads LFLCLSMLWFATSFAYYGLVM. Over 359–368 the chain is Extracellular; that stretch reads DLQGFGVSMY. Residues 369-389 form a helical membrane-spanning segment; that stretch reads LIQVIFGAVDLPAKFVCFLVI. Topologically, residues 390 to 395 are cytoplasmic; sequence NSMGRR. Residues 396–416 traverse the membrane as a helical segment; it reads PAQMASLLLAGICILVNGIIP. The Extracellular segment spans residues 417-425; it reads KSHTIIRTS. A helical membrane pass occupies residues 426 to 446; the sequence is LAVLGKGCLASSFNCIFLYTG. Topologically, residues 447–484 are cytoplasmic; that stretch reads ELYPTVIRQTGLGMGSTMARVGSIVSPLVSMTAEFYPS. The chain crosses the membrane as a helical span at residues 485-505; it reads MPLFIFGAVPVVASAVTALLP. The Extracellular portion of the chain corresponds to 506–551; it reads ETLGQPLPDTVQDLKSRSRGKQNQQQQEQQKQMMPLQASTQEKNGL. A disordered region spans residues 514 to 551; the sequence is DTVQDLKSRSRGKQNQQQQEQQKQMMPLQASTQEKNGL. Positions 526-537 are enriched in low complexity; that stretch reads KQNQQQQEQQKQ. Over residues 542 to 551 the composition is skewed to polar residues; the sequence is QASTQEKNGL.

Belongs to the major facilitator (TC 2.A.1) superfamily. Organic cation transporter (TC 2.A.1.19) family. In terms of processing, glycosylated. Glycosylation is necessary for proper targeting of the transporter to the plasma membrane. In terms of tissue distribution, highly expressed in kidney; in the particular segment of the proximal tubule. In kidney, found preferentially in the cortex and outer medulla and weakly in the inner medulla. Expressed to a lower extent in brain.

It is found in the cell membrane. The protein localises to the basolateral cell membrane. The protein resides in the basal cell membrane. It catalyses the reaction (6R)-L-erythro-5,6,7,8-tetrahydrobiopterin(out) + a dicarboxylate(in) = (6R)-L-erythro-5,6,7,8-tetrahydrobiopterin(in) + a dicarboxylate(out). The enzyme catalyses L-erythro-7,8-dihydrobiopterin(out) + a dicarboxylate(in) = L-erythro-7,8-dihydrobiopterin(in) + a dicarboxylate(out). The catalysed reaction is L-sepiapterin(out) + a dicarboxylate(in) = L-sepiapterin(in) + a dicarboxylate(out). It carries out the reaction prostaglandin F2alpha(out) + a dicarboxylate(in) = prostaglandin F2alpha(in) + a dicarboxylate(out). It catalyses the reaction prostaglandin E2(out) + a dicarboxylate(in) = prostaglandin E2(in) + a dicarboxylate(out). The enzyme catalyses 3',5'-cyclic AMP(out) + a dicarboxylate(in) = 3',5'-cyclic AMP(in) + a dicarboxylate(out). The catalysed reaction is 3',5'-cyclic GMP(out) + a dicarboxylate(in) = 3',5'-cyclic GMP(in) + a dicarboxylate(out). It carries out the reaction urate(out) + a dicarboxylate(in) = urate(in) + a dicarboxylate(out). It catalyses the reaction kynurenate(out) + glutarate(in) = kynurenate(in) + glutarate(out). The enzyme catalyses (indol-3-yl)acetate(out) + a dicarboxylate(in) = (indol-3-yl)acetate(in) + a dicarboxylate(out). The catalysed reaction is indoxyl sulfate(out) + a dicarboxylate(in) = indoxyl sulfate(in) + a dicarboxylate(out). It carries out the reaction N-benzoylglycine(out) + a dicarboxylate(in) = N-benzoylglycine(in) + a dicarboxylate(out). It catalyses the reaction 3-carboxy-4-methyl-5-propyl-2-furanpropanoate(out) + a dicarboxylate(in) = 3-carboxy-4-methyl-5-propyl-2-furanpropanoate(in) + a dicarboxylate(out). Its function is as follows. Secondary active transporter that functions as a Na(+)-independent organic anion (OA)/dicarboxylate antiporter where the uptake of one molecule of OA into the cell is coupled with an efflux of one molecule of intracellular dicarboxylate such as alpha-ketoglutarate or glutarate. Mediates the uptake of OA across the basolateral side of proximal tubule epithelial cells, thereby contributing to the renal elimination of endogenous OA from the systemic circulation into the urine. Function as a biopterin transporters involved in the uptake and the secretion of coenzymes tetrahydrobiopterin (BH4) dihydrobiopterin (BH2) and sepiapterin to urine, thereby determining baseline levels of blood biopterins. Transports prostaglandin E2 (PGE2) and prostaglandin F2-alpha (PGF2-alpha) and may contribute to their renal excretion. Also mediates the uptake of cyclic nucleotides such as cAMP and cGMP. Involved in the transport of neuroactive tryptophan metabolites kynurenate (KYNA) and xanthurenate (XA) and may contribute to their secretion from the brain. May transport glutamate. Also involved in the disposition of uremic toxins and potentially toxic xenobiotics by the renal organic anion secretory pathway, helping reduce their undesired toxicological effects on the body. Uremic toxins include the indoxyl sulfate (IS), hippurate, indole acetate (IA), 3-carboxy-4- methyl-5-propyl-2-furanpropionate(CMPF) and urate. Xenobiotics include the mycotoxin ochratoxin (OTA). May also contribute to the transport of organic compounds in testes across the blood-testis-barrier. May also work as a bidirectional OA/dicarboxylate exchanger. This chain is Solute carrier family 22 member 6, found in Rattus norvegicus (Rat).